A 278-amino-acid chain; its full sequence is Transmembrane protein 41A-B (278 aa).

An N-terminal signal peptide occupies residues 1–23 (MRSIWGLIVLVAAATFYLYLLSA). The next 5 membrane-spanning stretches (helical) occupy residues 78-98 (GYVF…AIPG), 101-121 (FLNM…IACT), 164-184 (LFFF…FLNV), 191-211 (IPIP…NFIC), and 230-250 (WFTL…GALI).

The protein belongs to the TMEM41 family.

Its subcellular location is the membrane. This Danio rerio (Zebrafish) protein is Transmembrane protein 41A-B.